Consider the following 322-residue polypeptide: Cyanophycinase (322 aa).

Active-site charge relay system residues include S178, E196, and H220.

This sequence belongs to the peptidase S51 family.

The catalysed reaction is [L-4-(L-arginin-2-N-yl)aspartate](n) + H2O = [L-4-(L-arginin-2-N-yl)aspartate](n-1) + L-4-(L-arginin-2-N-yl)aspartate. Exopeptidase that catalyzes the hydrolytic cleavage of multi-L-arginyl-poly-L-aspartic acid (cyanophycin; a water-insoluble reserve polymer) into aspartate-arginine dipeptides. The chain is Cyanophycinase (cphB) from Synechococcus elongatus.